An 894-amino-acid chain; its full sequence is Bifunctional enzyme RhaA/RhaB (894 aa).

The tract at residues methionine 1–proline 465 is rhamnulokinase. Positions glutamine 466 to arginine 894 are L-rhamnose isomerase. Histidine 730, aspartate 762, and aspartate 764 together coordinate Mn(2+).

The protein in the N-terminal section; belongs to the rhamnulokinase family. In the C-terminal section; belongs to the rhamnose isomerase family. Mn(2+) is required as a cofactor.

The protein resides in the cytoplasm. It carries out the reaction L-rhamnulose + ATP = L-rhamnulose 1-phosphate + ADP + H(+). The catalysed reaction is L-rhamnopyranose = L-rhamnulose. The protein operates within carbohydrate degradation; L-rhamnose degradation; glycerone phosphate from L-rhamnose: step 1/3. It functions in the pathway carbohydrate degradation; L-rhamnose degradation; glycerone phosphate from L-rhamnose: step 2/3. In Shouchella clausii (strain KSM-K16) (Alkalihalobacillus clausii), this protein is Bifunctional enzyme RhaA/RhaB (rhaAB).